The chain runs to 122 residues: Probable dihydroneopterin aldolase (122 aa).

Substrate contacts are provided by residues Glu21, Tyr54, and 73–74; that span reads LE. Lys101 (proton donor/acceptor) is an active-site residue.

Belongs to the DHNA family.

It catalyses the reaction 7,8-dihydroneopterin = 6-hydroxymethyl-7,8-dihydropterin + glycolaldehyde. Its pathway is cofactor biosynthesis; tetrahydrofolate biosynthesis; 2-amino-4-hydroxy-6-hydroxymethyl-7,8-dihydropteridine diphosphate from 7,8-dihydroneopterin triphosphate: step 3/4. In terms of biological role, catalyzes the conversion of 7,8-dihydroneopterin to 6-hydroxymethyl-7,8-dihydropterin. This Chlamydia muridarum (strain MoPn / Nigg) protein is Probable dihydroneopterin aldolase (folB).